Consider the following 170-residue polypeptide: Cytochrome b6-f complex subunit 4 (170 aa).

A run of 3 helical transmembrane segments spans residues 46-66 (LLFMFPVVILGTIGVIVGLSV), 105-125 (LLGIALMSAIPVGLLFVPFIE), and 141-161 (TVFLIGTLVTLYLGIGATLPL).

Belongs to the cytochrome b family. PetD subfamily. In terms of assembly, the 4 large subunits of the cytochrome b6-f complex are cytochrome b6, subunit IV (17 kDa polypeptide, PetD), cytochrome f and the Rieske protein, while the 4 small subunits are PetG, PetL, PetM and PetN. The complex functions as a dimer.

The protein localises to the cellular thylakoid membrane. Its function is as follows. Component of the cytochrome b6-f complex, which mediates electron transfer between photosystem II (PSII) and photosystem I (PSI), cyclic electron flow around PSI, and state transitions. The chain is Cytochrome b6-f complex subunit 4 from Synechococcus sp. (strain JA-2-3B'a(2-13)) (Cyanobacteria bacterium Yellowstone B-Prime).